Here is a 134-residue protein sequence, read N- to C-terminus: Replication enhancer protein (134 aa).

This sequence belongs to the geminiviridae replication enhancer protein family. Homooligomer. Interacts with the replication-associated protein (REP). Interacts with host proliferating cell nuclear antigen (PCNA). Interacts with host retinoblastoma-related protein 1 (RBR1), and may thereby deregulate the host cell cycle. Oligomerization and interaction with PCNA are necessary for optimal replication enhancement.

Functionally, increases viral DNA accumulation. Enhances infectivity and symptom expression. This is Replication enhancer protein from Manihot esculenta (Cassava).